The sequence spans 241 residues: 3-oxoacyl-[acyl-carrier-protein] reductase FabG (241 aa).

Residues 13–16 (GASG), serine 38, 57–58 (EV), and asparagine 83 each bind NADP(+). Position 135 (serine 135) interacts with substrate. Tyrosine 148 serves as the catalytic Proton acceptor. NADP(+) contacts are provided by residues 148–152 (YCASK) and isoleucine 181.

It belongs to the short-chain dehydrogenases/reductases (SDR) family. In terms of assembly, homotetramer.

The catalysed reaction is a (3R)-hydroxyacyl-[ACP] + NADP(+) = a 3-oxoacyl-[ACP] + NADPH + H(+). Its pathway is lipid metabolism; fatty acid biosynthesis. Its function is as follows. Catalyzes the NADPH-dependent reduction of beta-ketoacyl-ACP substrates to beta-hydroxyacyl-ACP products, the first reductive step in the elongation cycle of fatty acid biosynthesis. This Rickettsia conorii (strain ATCC VR-613 / Malish 7) protein is 3-oxoacyl-[acyl-carrier-protein] reductase FabG (fabG).